The following is a 358-amino-acid chain: Holliday junction branch migration complex subunit RuvB (358 aa).

Positions methionine 1–tyrosine 183 are large ATPase domain (RuvB-L). Residues leucine 22, arginine 23, glycine 64, lysine 67, threonine 68, threonine 69, glutamate 130–phenylalanine 132, arginine 173, tyrosine 183, and arginine 220 contribute to the ATP site. Residue threonine 68 participates in Mg(2+) binding. Residues serine 184–glutamate 254 form a small ATPAse domain (RuvB-S) region. Residues glutamate 257–glycine 358 are head domain (RuvB-H). Positions 312 and 317 each coordinate DNA.

It belongs to the RuvB family. Homohexamer. Forms an RuvA(8)-RuvB(12)-Holliday junction (HJ) complex. HJ DNA is sandwiched between 2 RuvA tetramers; dsDNA enters through RuvA and exits via RuvB. An RuvB hexamer assembles on each DNA strand where it exits the tetramer. Each RuvB hexamer is contacted by two RuvA subunits (via domain III) on 2 adjacent RuvB subunits; this complex drives branch migration. In the full resolvosome a probable DNA-RuvA(4)-RuvB(12)-RuvC(2) complex forms which resolves the HJ.

Its subcellular location is the cytoplasm. The catalysed reaction is ATP + H2O = ADP + phosphate + H(+). Functionally, the RuvA-RuvB-RuvC complex processes Holliday junction (HJ) DNA during genetic recombination and DNA repair, while the RuvA-RuvB complex plays an important role in the rescue of blocked DNA replication forks via replication fork reversal (RFR). RuvA specifically binds to HJ cruciform DNA, conferring on it an open structure. The RuvB hexamer acts as an ATP-dependent pump, pulling dsDNA into and through the RuvAB complex. RuvB forms 2 homohexamers on either side of HJ DNA bound by 1 or 2 RuvA tetramers; 4 subunits per hexamer contact DNA at a time. Coordinated motions by a converter formed by DNA-disengaged RuvB subunits stimulates ATP hydrolysis and nucleotide exchange. Immobilization of the converter enables RuvB to convert the ATP-contained energy into a lever motion, pulling 2 nucleotides of DNA out of the RuvA tetramer per ATP hydrolyzed, thus driving DNA branch migration. The RuvB motors rotate together with the DNA substrate, which together with the progressing nucleotide cycle form the mechanistic basis for DNA recombination by continuous HJ branch migration. Branch migration allows RuvC to scan DNA until it finds its consensus sequence, where it cleaves and resolves cruciform DNA. In Paenarthrobacter aurescens (strain TC1), this protein is Holliday junction branch migration complex subunit RuvB.